Here is a 189-residue protein sequence, read N- to C-terminus: Peptidyl-tRNA hydrolase (189 aa).

Y15 provides a ligand contact to tRNA. The Proton acceptor role is filled by H20. 3 residues coordinate tRNA: F66, N68, and N114.

The protein belongs to the PTH family. As to quaternary structure, monomer.

It localises to the cytoplasm. It catalyses the reaction an N-acyl-L-alpha-aminoacyl-tRNA + H2O = an N-acyl-L-amino acid + a tRNA + H(+). Hydrolyzes ribosome-free peptidyl-tRNAs (with 1 or more amino acids incorporated), which drop off the ribosome during protein synthesis, or as a result of ribosome stalling. In terms of biological role, catalyzes the release of premature peptidyl moieties from peptidyl-tRNA molecules trapped in stalled 50S ribosomal subunits, and thus maintains levels of free tRNAs and 50S ribosomes. This chain is Peptidyl-tRNA hydrolase, found in Streptococcus equi subsp. zooepidemicus (strain MGCS10565).